A 434-amino-acid chain; its full sequence is Histidine--tRNA ligase (434 aa).

Residues Asp412–Val434 form a disordered region.

The protein belongs to the class-II aminoacyl-tRNA synthetase family.

The protein resides in the cytoplasm. The enzyme catalyses tRNA(His) + L-histidine + ATP = L-histidyl-tRNA(His) + AMP + diphosphate + H(+). In Haloquadratum walsbyi (strain DSM 16790 / HBSQ001), this protein is Histidine--tRNA ligase.